An 819-amino-acid polypeptide reads, in one-letter code: Serine/threonine-protein phosphatase 1 regulatory subunit 10 (819 aa).

In terms of domain architecture, TFIIS N-terminal spans K73 to Q147. 3 disordered regions span residues Q151–S204, K296–V391, and S495–M785. 2 stretches are compositionally biased toward basic and acidic residues: residues A153–K165 and K173–K190. Over residues S305–K327 the composition is skewed to polar residues. The short motif at K386 to V415 is the PP1-binding motif element. Residues S495–D504 are compositionally biased toward basic and acidic residues. Polar residues-rich tracts occupy residues M533 to D543 and M560 to L578. Positions K589–K604 are enriched in basic and acidic residues. Low complexity predominate over residues L606–G618. 2 stretches are compositionally biased toward pro residues: residues F635 to N663 and H670 to N695. Composition is skewed to basic and acidic residues over residues H704–D715 and H758–R777. The C3H1-type zinc-finger motif lies at M785–I813.

In terms of assembly, component of the PNUTS-PP1 complex (also named PTW/PP1 complex).

Its subcellular location is the nucleus. It localises to the chromosome. Its function is as follows. Substrate-recognition component of the PNUTS-PP1 protein phosphatase complex, a protein phosphatase 1 (PP1) complex that promotes RNA polymerase II transcription pause-release, allowing transcription elongation. Promoter-proximal pausing by RNA polymerase II is a transcription halt following transcription initiation but prior to elongation, which acts as a checkpoint to control that transcripts are favorably configured for transcriptional elongation. The PNUTS-PP1 complex mediates the release of RNA polymerase II from promoter-proximal region of genes by catalyzing dephosphorylation of proteins involved in transcription. In some context, PPP1R10/PNUTS also acts as an inhibitor of protein phosphatase 1 (PP1) activity by preventing access to substrates. The chain is Serine/threonine-protein phosphatase 1 regulatory subunit 10 (ppp1r10) from Xenopus laevis (African clawed frog).